The primary structure comprises 267 residues: MPPFATIPATERNSAAQHQDPSPMSQPFDLPALASSLADKSPQDILKAAFEHFGDELWISFSGAEDVVLVDMAWKLNRNVKVFSLDTGRLHPETYRFIDQVREHYGIAIDVLSPDPRLLEPLVKEKGLFSFYRDGHGECCGIRKIEPLKRKLAGVRAWATGQRRDQSPGTRSQVAVLEIDGAFSTPEKPLYKFNPLSSMTSEEVWGYIRMLELPYNSLHERGYISIGCEPCTRPVLPNQHEREGRWWWEEATHKECGLHAGNLISKA.

Positions methionine 1–aspartate 29 are disordered. Residues glutamate 11–serine 25 show a composition bias toward polar residues. [4Fe-4S] cluster contacts are provided by cysteine 139, cysteine 140, cysteine 228, and cysteine 231. Cysteine 256 functions as the Nucleophile; cysteine thiosulfonate intermediate in the catalytic mechanism.

This sequence belongs to the PAPS reductase family. CysH subfamily. [4Fe-4S] cluster serves as cofactor.

It localises to the cytoplasm. It catalyses the reaction [thioredoxin]-disulfide + sulfite + AMP + 2 H(+) = adenosine 5'-phosphosulfate + [thioredoxin]-dithiol. It participates in sulfur metabolism; hydrogen sulfide biosynthesis; sulfite from sulfate. Functionally, catalyzes the formation of sulfite from adenosine 5'-phosphosulfate (APS) using thioredoxin as an electron donor. This Pseudomonas aeruginosa (strain LESB58) protein is Adenosine 5'-phosphosulfate reductase.